The sequence spans 557 residues: MATSHGVLRSLDNAKTQSYHYLAIVIAGMGFFTDAYDLFCITAVTKLIGRLYYSDPTNHSPGILPTNVNNAITGVALCGTLAGQLFFGWLGDKLGRKKVYGITLTTMVGFALLSGLSFGSTPKTVVTSLCFFRFWLGFGIGGDYPLSAVIMSEYANQKTRGSFIAAVFAMQGVGILVAGGVAMFVSKLFLLYFPAPDFETDAVLSTQPEGDFVWRIVLMFGAVPAALTYYWRMKMPETARYTALVEGDHKKAVEDMAKVLDRNILSEESNTRIAIRPLESHSYGLFSSEFLNRHGLHLLGTTSTWFLLDIAFYSLQLTQKDIYPTSGLVYKASKMNAIEEVFQLSRAMFAVALIATVPGYWCTVFLIEKIGRFRIQLIGFLVMSVCMWFLGHNYRSFRGEESACKNGSKYSFCNGNPVMFAILFGLTLFFANFGPNSTTFIVPAELFPARLRSTCHGISAAAGKSGAIVGAFGVQSYIGNSHDKSKGTKQAIMALAVVNLLGFFFTFLVPETQGRSLEEISGEEKDFQGNNADEEISGERNGTRNASVDKSPETSMV.

Residues 1-20 (MATSHGVLRSLDNAKTQSYH) lie on the Cytoplasmic side of the membrane. Residues 21-41 (YLAIVIAGMGFFTDAYDLFCI) traverse the membrane as a helical segment. The Extracellular portion of the chain corresponds to 42-70 (TAVTKLIGRLYYSDPTNHSPGILPTNVNN). A helical transmembrane segment spans residues 71–91 (AITGVALCGTLAGQLFFGWLG). Residues 92-98 (DKLGRKK) are Cytoplasmic-facing. Residues 99–119 (VYGITLTTMVGFALLSGLSFG) form a helical membrane-spanning segment. The Extracellular segment spans residues 120–130 (STPKTVVTSLC). The helical transmembrane segment at 131-151 (FFRFWLGFGIGGDYPLSAVIM) threads the bilayer. Topologically, residues 152–162 (SEYANQKTRGS) are cytoplasmic. The chain crosses the membrane as a helical span at residues 163-183 (FIAAVFAMQGVGILVAGGVAM). Topologically, residues 184–210 (FVSKLFLLYFPAPDFETDAVLSTQPEG) are extracellular. A helical transmembrane segment spans residues 211 to 231 (DFVWRIVLMFGAVPAALTYYW). The Cytoplasmic portion of the chain corresponds to 232–294 (RMKMPETARY…LFSSEFLNRH (63 aa)). The chain crosses the membrane as a helical span at residues 295–315 (GLHLLGTTSTWFLLDIAFYSL). At 316-346 (QLTQKDIYPTSGLVYKASKMNAIEEVFQLSR) the chain is on the extracellular side. Residues 347–367 (AMFAVALIATVPGYWCTVFLI) form a helical membrane-spanning segment. The Cytoplasmic segment spans residues 368 to 369 (EK). The chain crosses the membrane as a helical span at residues 370 to 390 (IGRFRIQLIGFLVMSVCMWFL). Residues 391–414 (GHNYRSFRGEESACKNGSKYSFCN) are Extracellular-facing. N-linked (GlcNAc...) asparagine glycosylation is present at N406. Residues 415–435 (GNPVMFAILFGLTLFFANFGP) traverse the membrane as a helical segment. The Cytoplasmic segment spans residues 436 to 457 (NSTTFIVPAELFPARLRSTCHG). A helical membrane pass occupies residues 458-478 (ISAAAGKSGAIVGAFGVQSYI). The Extracellular portion of the chain corresponds to 479 to 490 (GNSHDKSKGTKQ). Residues 491–511 (AIMALAVVNLLGFFFTFLVPE) form a helical membrane-spanning segment. Over 512–557 (TQGRSLEEISGEEKDFQGNNADEEISGERNGTRNASVDKSPETSMV) the chain is Cytoplasmic. The segment at 519 to 557 (EISGEEKDFQGNNADEEISGERNGTRNASVDKSPETSMV) is disordered. Over residues 543–557 (TRNASVDKSPETSMV) the composition is skewed to polar residues.

The protein belongs to the major facilitator superfamily. Phosphate:H(+) symporter (TC 2.A.1.9) family.

It localises to the cell membrane. It carries out the reaction phosphate(in) + H(+)(in) = phosphate(out) + H(+)(out). Functionally, low-affinity transporter for external inorganic phosphate (Pi) that may be involved in the acquisition of phosphate released by arbuscular mycorrhizal (AM) fungi (e.g. Glomus versiforme and G.intraradices) during AM symbiosis; not required for mycorrhizal arbuscule development. The protein is Low affinity inorganic phosphate transporter 8 of Medicago truncatula (Barrel medic).